The chain runs to 1541 residues: Multiple epidermal growth factor-like domains protein 6 (1541 aa).

A signal peptide spans 1 to 30; that stretch reads MSFLEEARAAGRAVVLALVLLLLPAVPVGA. The EMI domain occupies 44–125; that stretch reads MPHVCAEQEL…QQPDEEGCLS (82 aa). 15 disulfides stabilise this stretch: cysteine 48–cysteine 111, cysteine 77–cysteine 83, cysteine 110–cysteine 123, cysteine 128–cysteine 139, cysteine 133–cysteine 147, cysteine 149–cysteine 158, cysteine 165–cysteine 176, cysteine 172–cysteine 185, cysteine 187–cysteine 200, cysteine 242–cysteine 255, cysteine 248–cysteine 268, cysteine 270–cysteine 283, cysteine 289–cysteine 300, cysteine 296–cysteine 309, and cysteine 311–cysteine 324. Residues 124–159 form the EGF-like 1 domain; that stretch reads LSAECSASLCFHGGRCVPGSAQPCHCPPGFQGPRCQ. The EGF-like 2; calcium-binding domain occupies 161 to 201; it reads DVDECRTHNGGCQHRCVNTPGSYLCECKPGFRLHTDSRTCL. EGF-like domains are found at residues 206–242 and 238–284; these read CALGNGGCQHHCVQLTITRHRCQCRPGFQLQEDGRHC and DGRH…KACE. The N-linked (GlcNAc...) asparagine glycan is linked to asparagine 252. An EGF-like 5; calcium-binding domain is found at 285–325; the sequence is DVDECAAGLAQCAHGCLNTQGSFKCVCHAGYELGADGRQCY. EGF-like domains follow at residues 335–370 and 375–411; these read CEANNGGCSHGCSHTSAGPLCTCPRGYELDTDQRTC and DCADSPCCQQVCTNNPGGYECGCYAGYRLSADGCGCE. The 41-residue stretch at 412–452 folds into the EGF-like 8; calcium-binding domain; the sequence is DVDECASSRGGCEHHCTNLAGSFQCSCEAGYRLHEDRRGCS. Intrachain disulfides connect cysteine 416-cysteine 427, cysteine 423-cysteine 436, cysteine 438-cysteine 451, cysteine 520-cysteine 533, cysteine 527-cysteine 540, cysteine 542-cysteine 551, cysteine 564-cysteine 576, cysteine 570-cysteine 583, cysteine 585-cysteine 594, cysteine 607-cysteine 619, cysteine 613-cysteine 626, and cysteine 628-cysteine 637. 19 consecutive EGF-like domains span residues 516–552, 560–595, 603–638, 736–770, 783–814, 822–857, 865–901, 909–944, 955–987, 995–1030, 1038–1073, 1081–1116, 1124–1159, 1211–1246, 1254–1289, 1297–1332, 1345–1375, 1383–1418, and 1469–1504; these read FGHDCSLTCDDCRNGGTCLLGLDGCDCPEGWTGLICN, FGKNCSFSCSCQNGGTCDSVTGACRCPPGVSGTNCE, YGKHCRKKCNCANRGRCHRLYGACLCDPGLYGRFCH, FGVNCSSSCSCGGAPCHGVTGQCRCPPGRTGEDCE, QEICPACQHAARCDPETGACLCLPGFVGSRCQ, YGPSCQTRCSCANDGHCHPATGHCSCAPGWTGFSCQ, WGPDCSHPCNCSAGHGSCDAISGLCLCEAGYVGPRCE, FGPGCEQRCQCQHGAACDHVSGACTCPAGWRGTFCE, DCRSACNCTAGAACDAVNGSCLCPAGRRGPRCA, YGHNCSQACACFNGASCDPVHGQCHCAPGWMGPSCL, YGDNCRHSCLCQNGGTCDPVSGHCACPEGWAGLACE, VRAGCRHSGGCLNGGLCDPHTGRCLCPAGWTGDKCQ, FGEACAQRCSCPPGAACHHVTGACRCPPGFTGSGCE, YGPGCEQLCGCLNGGSCDAATGACRCPTGFLGTDCN, FGPNCTHVCGCGQGAACDPVTGTCLCPPGRAGVRCE, FGVGCEHTCSCRNGGLCHASNGSCSCGLGWTGRHCE, HLECSCHNNSTCEPATGTCRCGPGFYGQACE, HGAGCQGLCWCQHGAPCDPISGRCLCPAGFHGHFCE, and FGPSCTLHCDCGGGADCDPVSGQCHCVDGYMGPTCR. Asparagine 739 carries an N-linked (GlcNAc...) asparagine glycan. Cystine bridges form between cysteine 740–cysteine 751, cysteine 744–cysteine 758, cysteine 760–cysteine 769, cysteine 786–cysteine 795, cysteine 789–cysteine 802, cysteine 804–cysteine 813, cysteine 826–cysteine 838, cysteine 832–cysteine 845, cysteine 847–cysteine 856, cysteine 869–cysteine 882, cysteine 873–cysteine 889, cysteine 891–cysteine 900, cysteine 913–cysteine 925, cysteine 919–cysteine 932, and cysteine 934–cysteine 943. Disulfide bonds link cysteine 999–cysteine 1011, cysteine 1005–cysteine 1018, cysteine 1020–cysteine 1029, cysteine 1042–cysteine 1054, cysteine 1048–cysteine 1061, cysteine 1063–cysteine 1072, cysteine 1085–cysteine 1097, cysteine 1091–cysteine 1104, cysteine 1106–cysteine 1115, cysteine 1128–cysteine 1140, cysteine 1134–cysteine 1147, cysteine 1149–cysteine 1158, cysteine 1215–cysteine 1227, cysteine 1221–cysteine 1234, cysteine 1236–cysteine 1245, cysteine 1258–cysteine 1270, cysteine 1264–cysteine 1277, cysteine 1279–cysteine 1288, cysteine 1301–cysteine 1313, cysteine 1307–cysteine 1320, cysteine 1322–cysteine 1331, cysteine 1348–cysteine 1356, cysteine 1350–cysteine 1363, cysteine 1365–cysteine 1374, cysteine 1387–cysteine 1399, cysteine 1393–cysteine 1406, cysteine 1408–cysteine 1417, cysteine 1473–cysteine 1485, cysteine 1479–cysteine 1492, and cysteine 1494–cysteine 1503. Residues 1509–1541 form a disordered region; the sequence is LRLPENPSLAQGSAGTLPASSRPTSRSGGPARH. Over residues 1516-1535 the composition is skewed to polar residues; sequence SLAQGSAGTLPASSRPTSRS.

Its subcellular location is the secreted. This chain is Multiple epidermal growth factor-like domains protein 6 (MEGF6), found in Homo sapiens (Human).